A 500-amino-acid polypeptide reads, in one-letter code: Glycerol kinase (500 aa).

Residue threonine 13 coordinates ADP. ATP contacts are provided by threonine 13, threonine 14, and serine 15. Threonine 13 is a sn-glycerol 3-phosphate binding site. Arginine 17 contributes to the ADP binding site. Residues arginine 83, glutamate 84, tyrosine 135, and aspartate 244 each contribute to the sn-glycerol 3-phosphate site. Arginine 83, glutamate 84, tyrosine 135, aspartate 244, and glutamine 245 together coordinate glycerol. Threonine 266 and glycine 309 together coordinate ADP. ATP contacts are provided by threonine 266, glycine 309, glutamine 313, and glycine 410. Residues glycine 410 and asparagine 414 each contribute to the ADP site.

The protein belongs to the FGGY kinase family.

It catalyses the reaction glycerol + ATP = sn-glycerol 3-phosphate + ADP + H(+). It participates in polyol metabolism; glycerol degradation via glycerol kinase pathway; sn-glycerol 3-phosphate from glycerol: step 1/1. With respect to regulation, inhibited by fructose 1,6-bisphosphate (FBP). Functionally, key enzyme in the regulation of glycerol uptake and metabolism. Catalyzes the phosphorylation of glycerol to yield sn-glycerol 3-phosphate. The protein is Glycerol kinase of Burkholderia vietnamiensis (strain G4 / LMG 22486) (Burkholderia cepacia (strain R1808)).